Reading from the N-terminus, the 261-residue chain is uncharacterized protein (261 aa).

Residues isoleucine 33, lysine 60, aspartate 78, and asparagine 105 each coordinate NADP(+). The active-site Proton donor is the serine 157. Positions 172, 176, and 206 each coordinate NADP(+). Tyrosine 172 (proton acceptor) is an active-site residue. Catalysis depends on lysine 176, which acts as the Lowers pKa of active site Tyr.

The protein belongs to the short-chain dehydrogenases/reductases (SDR) family.

The protein resides in the cytoplasm. It localises to the nucleus. This is an uncharacterized protein from Schizosaccharomyces pombe (strain 972 / ATCC 24843) (Fission yeast).